A 114-amino-acid chain; its full sequence is uncharacterized protein (114 aa).

Positions 1 to 19 (MKASYLVLIFISIFSMAQA) are cleaved as a signal peptide. Serine 41 carries the post-translational modification Phosphoserine.

Belongs to the protease inhibitor I9 family.

This is an uncharacterized protein from Saccharomyces cerevisiae (strain ATCC 204508 / S288c) (Baker's yeast).